Here is a 392-residue protein sequence, read N- to C-terminus: Monooxygenase AgnR1 (392 aa).

An N-terminal signal peptide occupies residues 1–20; it reads MSAPQKCAAVVVGAGPAGLA. N-linked (GlcNAc...) asparagine glycosylation is present at asparagine 134.

In terms of biological role, monooxygenase; part of the gene cluster that mediates the biosynthesis of agnestins, dihydroxy-xanthone metabolites. The pathway begins with the assembly and cyclization of atrochrysone thioester by the non-reducing polyketide synthase Agnpks1. The atrochrysone carboxyl ACP thioesterase AgnL7 then breaks the thioester bond and releases the atrochrysone carboxylic acid as the first enzyme-free intermediate. The decarboxylase AgnL1 then catalyzes the concerted decarboxylation-elimination required to convert atochrysone carboxylic acid into emodin anthrone, which is further oxidized to emodin by the anthrone oxygenase AgnL2. Emodin then undergoes reduction catalyzed by the oxidoreductase AgnL4 to yield the dihydroquinone tautomer which is the substrate for reduction by the short chain dehydrogenase AgnL6 reduction to produce hydroxyketone, followed by AgnL8 dehydration and likely spontaneous autoxidation to chrysophanol. Baeyer-Villiger oxidation by the oxidase AgnL3 leads to monodictyphenone via cleavage of the C-10/C-10a bond of chrysophanol. Alternative cleavage at the C-4a/C-10 bond of chrysophanol also leads to the formation some cephalone F. Further conversion to agnestins A and B, requires reduction to dihydro-monodictyphenone, oxidation to agnestin C probably via an epoxide, and rearrangement to either agnestin A or agnestin B directly, although agnestin A or agnestin B can also interconvert. Within the cluster, AgnR1 is the only unassigned oxidoreductase present which could be involved in this conversion. However, AgnR1 seems not to be involved in this step, and thus genes involved in the proposed oxidation/reduction may be located elsewhere on the genome. Further agnestin A derivatives are probably formed by spontaneous decarboxylations, dehydrations and methanolysis reactions. The sequence is that of Monooxygenase AgnR1 from Paecilomyces divaricatus (Penicillium divaricatum).